The following is a 330-amino-acid chain: Flotillin-like protein FloA (330 aa).

The next 2 membrane-spanning stretches (helical) occupy residues 3–23 (IISV…TLYM) and 26–46 (LRLW…TLIA).

It belongs to the flotillin-like FloA family. As to quaternary structure, homooligomerizes.

Its subcellular location is the cell membrane. The protein resides in the membrane raft. In terms of biological role, found in functional membrane microdomains (FMM) that may be equivalent to eukaryotic membrane rafts. FMMs are highly dynamic and increase in number as cells age. Flotillins are thought to be important factors in membrane fluidity. In Sorangium cellulosum (strain So ce56) (Polyangium cellulosum (strain So ce56)), this protein is Flotillin-like protein FloA.